The chain runs to 256 residues: Lysosomal membrane ascorbate-dependent ferrireductase CYB561A3 (256 aa).

Over 1 to 3 (MAS) the chain is Cytoplasmic. A helical membrane pass occupies residues 4–24 (GWFYMSCMVLGSLGSMCILFT). A Cytochrome b561 domain is found at 12-219 (VLGSLGSMCI…FGLLVLYILL (208 aa)). Residues 25-40 (TYWMQYWRGGFAWDGT) are Lumenal-facing. Residues 41–61 (VLMFNWHPVLMVSGMVVLYGA) form a helical membrane-spanning segment. Heme b contacts are provided by His47 and Arg67. At 62 to 83 (ASLVYRLPASWVGPKLPWKVLH) the chain is on the cytoplasmic side. L-ascorbate-binding residues include Lys76 and Lys80. His83 lines the heme b pocket. A helical transmembrane segment spans residues 84-104 (AALHLLAFTVTVVGLTAVFGF). The Lumenal segment spans residues 105-119 (HNHSKITHLYSLHSW). The N-linked (GlcNAc...) asparagine glycan is linked to Asn106. Heme b-binding positions include 112-115 (HLYS) and His117. The chain crosses the membrane as a helical span at residues 120–140 (LGITTVALFACQWFLGFAVFL). Topologically, residues 141 to 154 (LPWASQWLRSLLKP) are cytoplasmic. Arg149 contributes to the L-ascorbate binding site. The helical transmembrane segment at 155 to 175 (VHVFFGACILSLSIASVISGI) threads the bilayer. Residues His156 and Glu177 each contribute to the heme b site. The Lumenal segment spans residues 176-202 (NEKLFFVLKNATRPYSSLPGEAVFANS). The helical transmembrane segment at 203 to 223 (TGILVVSFGLLVLYILLASSW) threads the bilayer. Arg224 is a binding site for heme b. The Cytoplasmic portion of the chain corresponds to 224-256 (RRPDPGALTDRQVWLLVSHYRWDKAKKACFAPC).

Homodimer. Heme b serves as cofactor. In terms of processing, N-glycosylated.

It is found in the late endosome membrane. The protein localises to the lysosome membrane. The enzyme catalyses Fe(3+)(out) + L-ascorbate(in) = monodehydro-L-ascorbate radical(in) + Fe(2+)(out) + H(+). Transmembrane reductase that uses ascorbate as an electron donor in the cytoplasm and transfers electrons across membranes to reduce iron cations Fe(3+) into Fe(2+) in the lumen of the late endosome and lysosome. Reduced iron can then be extruded from the late endosome and lysosome to the cytoplasm by divalent metal-specific transporters. It is therefore most probably involved in endosomal and lysosomal cellular iron homeostasis. This Rattus norvegicus (Rat) protein is Lysosomal membrane ascorbate-dependent ferrireductase CYB561A3.